The following is a 267-amino-acid chain: Cell division protein FtsQ (267 aa).

At 1-32 the chain is on the cytoplasmic side; sequence MRQKTISNKNKQTKNTNNISLRRKLGLMYKKA. The helical transmembrane segment at 33–53 threads the bilayer; it reads ILVLKIVLMIFVCLFVFTKYF. The Periplasmic portion of the chain corresponds to 54 to 267; that stretch reads TSIKTYLITN…DRNKYYIQKY (214 aa). Residues 73 to 141 form the POTRA domain; it reads FRLENVIIEG…NTVYIKLFER (69 aa).

The protein belongs to the FtsQ/DivIB family. FtsQ subfamily.

It localises to the cell inner membrane. Functionally, essential cell division protein. The protein is Cell division protein FtsQ of Rickettsia prowazekii (strain Madrid E).